Here is a 196-residue protein sequence, read N- to C-terminus: uncharacterized protein (196 aa).

The region spanning 7–67 (RNTKEKILTA…AVIDNHVKIW (61 aa)) is the HTH tetR-type domain. Positions 30–49 (SINDILDETATGKGQFYYYF) form a DNA-binding region, H-T-H motif.

This is an uncharacterized protein from Lactococcus lactis subsp. lactis (Streptococcus lactis).